We begin with the raw amino-acid sequence, 148 residues long: Glycine cleavage system H protein 5 (148 aa).

The Lipoyl-binding domain maps to 33–115; the sequence is VFTIGLTSVA…YGQGWIAKVK (83 aa). Position 74 is an N6-lipoyllysine (Lys-74).

Belongs to the GcvH family. As to quaternary structure, the glycine cleavage system is composed of four proteins: P, T, L and H. Requires (R)-lipoate as cofactor.

In terms of biological role, the glycine cleavage system catalyzes the degradation of glycine. The H protein shuttles the methylamine group of glycine from the P protein to the T protein. In Aquifex aeolicus (strain VF5), this protein is Glycine cleavage system H protein 5.